We begin with the raw amino-acid sequence, 78 residues long: Large ribosomal subunit protein bL28 (78 aa).

Positions 1–24 (MSKVCQVTGKRPASGNNVSHAHNK) are disordered.

Belongs to the bacterial ribosomal protein bL28 family.

This is Large ribosomal subunit protein bL28 from Nitrosococcus oceani (strain ATCC 19707 / BCRC 17464 / JCM 30415 / NCIMB 11848 / C-107).